The primary structure comprises 813 residues: Nuclear pore complex protein 5 (813 aa).

This sequence belongs to the nucleoporin Nup84/Nup107 family. In terms of assembly, part of the nuclear pore complex (NPC). May interact with mdf-1.

The protein localises to the nucleus. It is found in the nuclear pore complex. The protein resides in the chromosome. It localises to the centromere. Its subcellular location is the kinetochore. The protein localises to the nucleus membrane. In terms of biological role, involved in kinetochore assembly and chromosome segregation during embryonic mitosis. Required for the localization of the NDC80 complex member him-10, the chromosomal passenger complex component air-2 and nuclear pore complex proteins npp-23 and npp-15 to kinetochores during metaphase. Required for npp-23 localization to the nuclear envelope during interphase. Recruits mdf-1, a component of the spindle assembly checkpoint, to the nuclear envelope. Appears dispensable for the assembly of the nuclear pore complex and for nuclear protein import. The protein is Nuclear pore complex protein 5 of Caenorhabditis elegans.